A 166-amino-acid polypeptide reads, in one-letter code: Cyanate hydratase (166 aa).

Catalysis depends on residues Arg-92, Glu-95, and Ser-118.

It belongs to the cyanase family.

The enzyme catalyses cyanate + hydrogencarbonate + 3 H(+) = NH4(+) + 2 CO2. In terms of biological role, catalyzes the reaction of cyanate with bicarbonate to produce ammonia and carbon dioxide. The protein is Cyanate hydratase of Zea mays (Maize).